We begin with the raw amino-acid sequence, 59 residues long: Large ribosomal subunit protein bL32 (59 aa).

2 disordered regions span residues 1–23 (MAVQ…DFLT) and 35–59 (EVHL…TKND). Over residues 49-59 (RGKKVVKTKND) the composition is skewed to basic residues.

This sequence belongs to the bacterial ribosomal protein bL32 family.

The protein is Large ribosomal subunit protein bL32 of Burkholderia ambifaria (strain MC40-6).